A 235-amino-acid polypeptide reads, in one-letter code: Cytidylate kinase (235 aa).

11–19 contacts ATP; sequence GPSGVGKST.

This sequence belongs to the cytidylate kinase family. Type 1 subfamily.

It localises to the cytoplasm. It carries out the reaction CMP + ATP = CDP + ADP. The catalysed reaction is dCMP + ATP = dCDP + ADP. The chain is Cytidylate kinase from Syntrophotalea carbinolica (strain DSM 2380 / NBRC 103641 / GraBd1) (Pelobacter carbinolicus).